We begin with the raw amino-acid sequence, 103 residues long: Co-chaperonin GroES (103 aa).

This sequence belongs to the GroES chaperonin family. Heptamer of 7 subunits arranged in a ring. Interacts with the chaperonin GroEL.

Its subcellular location is the cytoplasm. Its function is as follows. Together with the chaperonin GroEL, plays an essential role in assisting protein folding. The GroEL-GroES system forms a nano-cage that allows encapsulation of the non-native substrate proteins and provides a physical environment optimized to promote and accelerate protein folding. GroES binds to the apical surface of the GroEL ring, thereby capping the opening of the GroEL channel. This is Co-chaperonin GroES from Dinoroseobacter shibae (strain DSM 16493 / NCIMB 14021 / DFL 12).